The sequence spans 217 residues: 3,4-dihydroxy-2-butanone 4-phosphate synthase (217 aa).

Residues 37 to 38 (RE), D42, 150 to 154 (RRGHT), and E174 contribute to the D-ribulose 5-phosphate site. E38 is a Mg(2+) binding site. Residue H153 coordinates Mg(2+).

It belongs to the DHBP synthase family. As to quaternary structure, homodimer. Mg(2+) serves as cofactor. Mn(2+) is required as a cofactor.

It carries out the reaction D-ribulose 5-phosphate = (2S)-2-hydroxy-3-oxobutyl phosphate + formate + H(+). Its pathway is cofactor biosynthesis; riboflavin biosynthesis; 2-hydroxy-3-oxobutyl phosphate from D-ribulose 5-phosphate: step 1/1. Its function is as follows. Catalyzes the conversion of D-ribulose 5-phosphate to formate and 3,4-dihydroxy-2-butanone 4-phosphate. This Syntrophotalea carbinolica (strain DSM 2380 / NBRC 103641 / GraBd1) (Pelobacter carbinolicus) protein is 3,4-dihydroxy-2-butanone 4-phosphate synthase.